A 359-amino-acid polypeptide reads, in one-letter code: tRNA pseudouridine synthase B (359 aa).

Aspartate 63 acts as the Nucleophile in catalysis.

It belongs to the pseudouridine synthase TruB family. Type 1 subfamily.

The catalysed reaction is uridine(55) in tRNA = pseudouridine(55) in tRNA. Functionally, responsible for synthesis of pseudouridine from uracil-55 in the psi GC loop of transfer RNAs. The chain is tRNA pseudouridine synthase B from Psychrobacter cryohalolentis (strain ATCC BAA-1226 / DSM 17306 / VKM B-2378 / K5).